The chain runs to 401 residues: UDP-GlcNAc:betaGal beta-1,3-N-acetylglucosaminyltransferase 9 (401 aa).

Residues 1–10 (MRRRLRLRRE) are Cytoplasmic-facing. A helical; Signal-anchor for type II membrane protein membrane pass occupies residues 11–31 (ALLTLLLGATLGLLLYAQQEG). The Lumenal portion of the chain corresponds to 32–401 (AAPTTSAPRA…VPAGPFQWGP (370 aa)). Positions 33–85 (APTTSAPRAQGRAAPGPTPGLRVFQAPDTGAAPPAYEGDTPEPPTPTGPFDFG) are disordered. A compositionally biased stretch (low complexity) spans 38 to 47 (APRAQGRAAP).

Belongs to the glycosyltransferase 31 family.

The protein resides in the golgi apparatus membrane. This is UDP-GlcNAc:betaGal beta-1,3-N-acetylglucosaminyltransferase 9 from Bos taurus (Bovine).